The following is a 366-amino-acid chain: Phospho-N-acetylmuramoyl-pentapeptide-transferase (366 aa).

The next 10 helical transmembrane spans lie at 27–47 (AALF…ISSL), 71–91 (TPTM…LLWA), 93–113 (LSSI…AIGF), 134–154 (LGIE…AAQS), 174–194 (LMLN…VGAG), 205–225 (GLAI…AYLA), 245–265 (LAVI…FNAP), 268–288 (AIFM…TVAV), 297–317 (VIIG…VFWF), and 343–363 (QVVI…LSTL).

This sequence belongs to the glycosyltransferase 4 family. MraY subfamily. The cofactor is Mg(2+).

Its subcellular location is the cell inner membrane. The catalysed reaction is UDP-N-acetyl-alpha-D-muramoyl-L-alanyl-gamma-D-glutamyl-meso-2,6-diaminopimeloyl-D-alanyl-D-alanine + di-trans,octa-cis-undecaprenyl phosphate = di-trans,octa-cis-undecaprenyl diphospho-N-acetyl-alpha-D-muramoyl-L-alanyl-D-glutamyl-meso-2,6-diaminopimeloyl-D-alanyl-D-alanine + UMP. It participates in cell wall biogenesis; peptidoglycan biosynthesis. Catalyzes the initial step of the lipid cycle reactions in the biosynthesis of the cell wall peptidoglycan: transfers peptidoglycan precursor phospho-MurNAc-pentapeptide from UDP-MurNAc-pentapeptide onto the lipid carrier undecaprenyl phosphate, yielding undecaprenyl-pyrophosphoryl-MurNAc-pentapeptide, known as lipid I. The protein is Phospho-N-acetylmuramoyl-pentapeptide-transferase of Sinorhizobium fredii (strain NBRC 101917 / NGR234).